Reading from the N-terminus, the 593-residue chain is Efflux pump FUBT (593 aa).

Residues 1–44 (MAIDPQPSSPSLSSETIANDTIGNDNNVNEPSVEPKTQENQHTV) are disordered. Residues 9–30 (SPSLSSETIANDTIGNDNNVNE) show a composition bias toward polar residues. Residue N19 is glycosylated (N-linked (GlcNAc...) asparagine). The next 12 membrane-spanning stretches (helical) occupy residues 98-118 (WAFV…SSAY), 135-155 (VATL…LIWA), 167-187 (FFFT…AGSI), 195-215 (FLTG…IADM), 227-247 (MFSG…GFLG), 254-274 (WLHG…TVFI), 337-357 (IYIS…PIVF), 367-387 (IGGL…ISFA), 410-430 (LPPA…FAWT), 438-458 (IVPI…FMAL), 468-488 (IFAA…GAAF), and 503-523 (WASS…FLFY). The disordered stretch occupies residues 570–593 (THNSHASAAHSHGHRRSLSYTRSV).

Belongs to the major facilitator superfamily. DHA1 family. Polyamines/proton antiporter (TC 2.A.1.2.16) subfamily.

It is found in the cell membrane. Efflux pump involved in export of fusaric acid, a mycotoxin with low to moderate toxicity to animals and humans, but with high phytotoxic properties. Constitutes a self-protecting mechanism of the fungus against critical levels of FSA within the cell. This is Efflux pump FUBT from Fusarium oxysporum (Fusarium vascular wilt).